Here is a 323-residue protein sequence, read N- to C-terminus: CYFIP-related Rac1 interactor A (323 aa).

This sequence belongs to the CYRI family.

The protein resides in the membrane. Functionally, may negatively regulate RAC1 signaling and RAC1-driven cytoskeletal remodeling. May regulate chemotaxis, cell migration and epithelial polarization by controlling the polarity, plasticity, duration and extent of protrusions. The polypeptide is CYFIP-related Rac1 interactor A (CYRIA) (Gallus gallus (Chicken)).